A 96-amino-acid chain; its full sequence is Small ribosomal subunit protein bS18 (96 aa).

It belongs to the bacterial ribosomal protein bS18 family. In terms of assembly, part of the 30S ribosomal subunit. Forms a tight heterodimer with protein bS6.

Functionally, binds as a heterodimer with protein bS6 to the central domain of the 16S rRNA, where it helps stabilize the platform of the 30S subunit. In Gluconobacter oxydans (strain 621H) (Gluconobacter suboxydans), this protein is Small ribosomal subunit protein bS18.